The sequence spans 667 residues: Phosphomethylpyrimidine synthase (667 aa).

Substrate is bound by residues asparagine 235, methionine 264, tyrosine 293, histidine 329, serine 349 to glycine 351, aspartate 390 to arginine 393, and glutamate 429. A Zn(2+)-binding site is contributed by histidine 433. Residue tyrosine 456 coordinates substrate. Histidine 497 contributes to the Zn(2+) binding site. Residues cysteine 577, cysteine 580, and cysteine 585 each coordinate [4Fe-4S] cluster. Residues aspartate 618–serine 642 form a disordered region.

It belongs to the ThiC family. In terms of assembly, homodimer. [4Fe-4S] cluster is required as a cofactor.

It catalyses the reaction 5-amino-1-(5-phospho-beta-D-ribosyl)imidazole + S-adenosyl-L-methionine = 4-amino-2-methyl-5-(phosphooxymethyl)pyrimidine + CO + 5'-deoxyadenosine + formate + L-methionine + 3 H(+). It participates in cofactor biosynthesis; thiamine diphosphate biosynthesis. Its function is as follows. Catalyzes the synthesis of the hydroxymethylpyrimidine phosphate (HMP-P) moiety of thiamine from aminoimidazole ribotide (AIR) in a radical S-adenosyl-L-methionine (SAM)-dependent reaction. The polypeptide is Phosphomethylpyrimidine synthase (Shewanella pealeana (strain ATCC 700345 / ANG-SQ1)).